The primary structure comprises 83 residues: Ardiscretin (83 aa).

The first 20 residues, 1–20, serve as a signal peptide directing secretion; the sequence is MKGMIMLISCLMLIDVVVES. The LCN-type CS-alpha/beta domain occupies 21 to 82; sequence KNGYIIEPKG…IFDYYNNKCG (62 aa). 4 disulfide bridges follow: Cys-31–Cys-81, Cys-35–Cys-57, Cys-43–Cys-62, and Cys-47–Cys-64. Cysteine amide is present on Cys-81.

Expressed by the venom gland.

The protein resides in the secreted. In terms of biological role, inhibits the sodium (Nav) currents in an apparent irreversible manner. Produces small depolarization and induces repetitive firing in squid axons. Is specific for arthropods (crickets, triatomides, crabs and squids), but is non-toxic to mice. Shows antibacterial activity against both Gram-positive and Gram-negative bacteria. The sequence is that of Ardiscretin from Tityus discrepans (Venezuelan scorpion).